The following is a 170-amino-acid chain: uncharacterized protein (170 aa).

This is an uncharacterized protein from Acidithiobacillus ferrooxidans (Thiobacillus ferrooxidans).